The chain runs to 169 residues: Phosphopantetheine adenylyltransferase (169 aa).

Thr-9 lines the substrate pocket. Residues 9–10 (TF) and His-17 each bind ATP. The substrate site is built by Lys-41, Leu-73, and Arg-87. ATP is bound by residues 88–90 (GLR), Glu-98, and 123–129 (YQFISGT).

The protein belongs to the bacterial CoaD family. Homohexamer. Mg(2+) serves as cofactor.

It is found in the cytoplasm. The enzyme catalyses (R)-4'-phosphopantetheine + ATP + H(+) = 3'-dephospho-CoA + diphosphate. It participates in cofactor biosynthesis; coenzyme A biosynthesis; CoA from (R)-pantothenate: step 4/5. In terms of biological role, reversibly transfers an adenylyl group from ATP to 4'-phosphopantetheine, yielding dephospho-CoA (dPCoA) and pyrophosphate. The polypeptide is Phosphopantetheine adenylyltransferase (Bordetella bronchiseptica (strain ATCC BAA-588 / NCTC 13252 / RB50) (Alcaligenes bronchisepticus)).